We begin with the raw amino-acid sequence, 93 residues long: U12-lycotoxin-Ls1a (93 aa).

The first 18 residues, 1 to 18 (MKFAVILLFSLVVLAVAS), serve as a signal peptide directing secretion. Residues 19–38 (ESVEEVRREIDIEDLPEQQR) constitute a propeptide that is removed on maturation.

It belongs to the neurotoxin 31 family. In terms of processing, contains 5 disulfide bonds. In terms of tissue distribution, expressed by the venom gland.

The protein resides in the secreted. The polypeptide is U12-lycotoxin-Ls1a (Lycosa singoriensis (Wolf spider)).